A 319-amino-acid polypeptide reads, in one-letter code: Beta-sarcoglycan (319 aa).

Positions 1 to 10 (MAAAAAAAAA) are enriched in low complexity. The segment at 1–33 (MAAAAAAAAAEQQSSNGPVKKSMREKAVERRNV) is disordered. At 1 to 66 (MAAAAAAAAA…GLRGRKGNLA (66 aa)) the chain is on the cytoplasmic side. Residues 22-33 (SMREKAVERRNV) are compositionally biased toward basic and acidic residues. A helical; Signal-anchor for type II membrane protein transmembrane segment spans residues 67 to 87 (ICVIILLFILAVINLIITLVI). The Extracellular segment spans residues 88–318 (WAVIRIGPNG…QISDNPCGNT (231 aa)). Residues asparagine 159, asparagine 212, and asparagine 259 are each glycosylated (N-linked (GlcNAc...) asparagine). Intrachain disulfides connect cysteine 289-cysteine 315 and cysteine 291-cysteine 308.

Belongs to the sarcoglycan beta/delta/gamma/zeta family. In terms of assembly, cross-link to form 2 major subcomplexes: one consisting of SGCB, SGCD and SGCG and the other consisting of SGCB and SGCD. The association between SGCB and SGCG is particularly strong while SGCA is loosely associated with the other sarcoglycans. Disulfide bonds are present.

Its subcellular location is the cell membrane. It is found in the sarcolemma. It localises to the cytoplasm. The protein resides in the cytoskeleton. Its function is as follows. Component of the sarcoglycan complex, a subcomplex of the dystrophin-glycoprotein complex which forms a link between the F-actin cytoskeleton and the extracellular matrix. In Pongo abelii (Sumatran orangutan), this protein is Beta-sarcoglycan (SGCB).